The chain runs to 616 residues: UvrABC system protein C (616 aa).

One can recognise a GIY-YIG domain in the interval 12–91 (ESPGVYLWKD…IKEYHPRFNI (80 aa)). Positions 202 to 237 (SDVMHHVRERMLDASERLDFERAAELRDALAHLEKM) constitute a UVR domain.

This sequence belongs to the UvrC family. As to quaternary structure, interacts with UvrB in an incision complex.

It localises to the cytoplasm. In terms of biological role, the UvrABC repair system catalyzes the recognition and processing of DNA lesions. UvrC both incises the 5' and 3' sides of the lesion. The N-terminal half is responsible for the 3' incision and the C-terminal half is responsible for the 5' incision. This Gemmatimonas aurantiaca (strain DSM 14586 / JCM 11422 / NBRC 100505 / T-27) protein is UvrABC system protein C.